Consider the following 314-residue polypeptide: Solute carrier family 25 member 44 (314 aa).

Solcar repeat units lie at residues 18-100 (KKFY…TRKF), 107-210 (SNTV…YAEQ), and 220-302 (PHIV…LKKL). 6 helical membrane passes run 20-42 (FYVF…TLIR), 71-90 (TGLY…GQCY), 113-133 (LVAG…IDVV), 185-201 (GYVA…AVWW), 222-239 (IVFQ…ASIL), and 278-296 (LSAR…VVGY).

This sequence belongs to the mitochondrial carrier (TC 2.A.29) family.

The protein resides in the mitochondrion membrane. It catalyses the reaction L-valine(in) = L-valine(out). The enzyme catalyses L-leucine(in) = L-leucine(out). Functionally, mitochondrial solute transporter which transports branched-chain amino acid (BCAA; valine, leucine and isoleucine) into mitochondria in brown adipose tissue (BAT). BAT is involved in BCAA catabolism and actively utilizes BCAA in the mitochondria for thermogenesis. The protein is Solute carrier family 25 member 44 of Homo sapiens (Human).